The chain runs to 310 residues: Carbamate kinase (310 aa).

The protein belongs to the carbamate kinase family. Homodimer.

It is found in the cytoplasm. The catalysed reaction is hydrogencarbonate + NH4(+) + ATP = carbamoyl phosphate + ADP + H2O + H(+). Its pathway is amino-acid degradation; L-arginine degradation via ADI pathway. The polypeptide is Carbamate kinase (Haemophilus influenzae (strain ATCC 51907 / DSM 11121 / KW20 / Rd)).